The sequence spans 171 residues: Large ribosomal subunit protein uL10 (171 aa).

It belongs to the universal ribosomal protein uL10 family. Part of the ribosomal stalk of the 50S ribosomal subunit. The N-terminus interacts with L11 and the large rRNA to form the base of the stalk. The C-terminus forms an elongated spine to which L12 dimers bind in a sequential fashion forming a multimeric L10(L12)X complex.

Its function is as follows. Forms part of the ribosomal stalk, playing a central role in the interaction of the ribosome with GTP-bound translation factors. This Corynebacterium glutamicum (strain ATCC 13032 / DSM 20300 / JCM 1318 / BCRC 11384 / CCUG 27702 / LMG 3730 / NBRC 12168 / NCIMB 10025 / NRRL B-2784 / 534) protein is Large ribosomal subunit protein uL10.